Reading from the N-terminus, the 58-residue chain is Light-harvesting protein B-870 alpha chain (58 aa).

Residues 1 to 15 (MSKFYKIWLVFDPRR) are Cytoplasmic-facing. A helical membrane pass occupies residues 16–36 (VFVAQGVFLFLLAVLIHLILL). Residue His32 participates in a bacteriochlorophyll binding. Topologically, residues 37–58 (STPAFNWLTVATAKHGYVAAAQ) are periplasmic.

Belongs to the antenna complex alpha subunit family. The core complex is formed by different alpha and beta chains, binding bacteriochlorophyll molecules, and arranged most probably in tetrameric structures disposed around the reaction center. The non-pigmented gamma chains may constitute additional components.

It is found in the cell inner membrane. Functionally, antenna complexes are light-harvesting systems, which transfer the excitation energy to the reaction centers. The chain is Light-harvesting protein B-870 alpha chain (pufA) from Rhodobacter capsulatus (Rhodopseudomonas capsulata).